We begin with the raw amino-acid sequence, 159 residues long: Probable inactive acireductone dioxygenase 1 (159 aa).

This sequence belongs to the acireductone dioxygenase (ARD) family.

The protein resides in the cytoplasm. Its subcellular location is the nucleus. In terms of biological role, probable inactive acireductone dioxygenase. In Caenorhabditis elegans, this protein is Probable inactive acireductone dioxygenase 1.